We begin with the raw amino-acid sequence, 123 residues long: uncharacterized protein (123 aa).

A helical transmembrane segment spans residues 5-25 (GTLVIIFAIVLILCIMLLFFY). A disordered region spans residues 32 to 53 (KPSVLPPPIPPPTPPPSKKKYD). A compositionally biased stretch (pro residues) spans 35-47 (VLPPPIPPPTPPP).

Belongs to the asfivirus CP123L family.

The protein localises to the host membrane. It localises to the virion. This is an uncharacterized protein from Ornithodoros (relapsing fever ticks).